A 336-amino-acid chain; its full sequence is UbiA prenyltransferase domain-containing protein 1 (336 aa).

The tract at residues 1 to 22 (MQEMKPAALSGSNGLNGASGSS) is disordered. Residues 7-22 (AALSGSNGLNGASGSS) show a composition bias toward low complexity. Transmembrane regions (helical) follow at residues 79–99 (LLLL…GNLV), 129–149 (VVMF…LLYF), 158–178 (LALI…GIGL), 180–200 (YVAL…VMFA), 201–221 (HAVQ…PLAL), 254–274 (LSYV…CILA), and 315–335 (LLMG…SLPL).

It belongs to the UbiA prenyltransferase family.

The protein resides in the endoplasmic reticulum membrane. It localises to the golgi apparatus membrane. It is found in the mitochondrion membrane. It catalyses the reaction menadiol + (2E,6E,10E)-geranylgeranyl diphosphate = menaquinol-4 + diphosphate. The enzyme catalyses all-trans-decaprenyl diphosphate + 4-hydroxybenzoate = 4-hydroxy-3-(all-trans-decaprenyl)benzoate + diphosphate. Its pathway is quinol/quinone metabolism; menaquinone biosynthesis. The protein operates within cofactor biosynthesis; ubiquinone biosynthesis. Prenyltransferase that mediates the formation of menaquinone-4 (MK-4) and coenzyme Q10. MK-4 is a vitamin K2 isoform required for endothelial cell development. Mediates the conversion of phylloquinone (PK) into MK-4, probably by cleaving the side chain of phylloquinone (PK) to release 2-methyl-1,4-naphthoquinone (menadione; K3) and then prenylating it with geranylgeranyl pyrophosphate (GGPP) to form MK-4. Also plays a role in cardiovascular development independently of MK-4 biosynthesis, by acting as a coenzyme Q10 biosynthetic enzyme: coenzyme Q10, also named ubiquinone, plays an important antioxidant role in the cardiovascular system. Mediates biosynthesis of coenzyme Q10 in the Golgi membrane, leading to protect cardiovascular tissues from nos3/eNOS-dependent oxidative stress. This Danio rerio (Zebrafish) protein is UbiA prenyltransferase domain-containing protein 1 (ubiad1).